The following is a 147-amino-acid chain: Protegrin-2 (147 aa).

Positions 1–29 (METQRASLCLGRWSLWLLLLALVVPSASA) are cleaved as a signal peptide. Residues 30–130 (QALSYREAVL…DITCNEVQGV (101 aa)) constitute a propeptide that is removed on maturation. The interval 61-80 (DQPPKADEDPGTPKPVSFTV) is disordered. Intrachain disulfides connect C85–C96, C107–C124, C136–C145, and C138–C143. V146 is subject to Valine amide.

This sequence belongs to the cathelicidin family.

Its subcellular location is the secreted. Microbicidal activity. Active against E.coli, Listeria monocytogenes and C.albicans, in vitro. In Sus scrofa (Pig), this protein is Protegrin-2 (NPG2).